We begin with the raw amino-acid sequence, 96 residues long: MPGKIAVEVAYALPEKQYLQRVTLQEGATVEEAIRASGLLELRTDIDLTKNKVGIYSRPAKLSDTVHDGDRVEIYRPLIADPKELRRQRAEKSANK.

The protein belongs to the UPF0125 (RnfH) family.

The chain is Protein RnfH from Escherichia coli O17:K52:H18 (strain UMN026 / ExPEC).